The following is a 227-amino-acid chain: MVIIMVFGNIGQDKSIEILKIPKDRVGVLIGKKGNVKKTIEKELGVKLEIDADGTVTIYGTDKQKDPLAVWKARDIVRAIGRGFNPEIALKLVSDEYVLEVIDIEDYASSDNSIRRLKGRVIGKEGKSRRYIESLTGANVSVYGNTVAIVGEHEPVQIAKEAVEMLLRGASHAKTYKFLERERQKIKRARFELWKKKSDVDELYEKMNPNYEEIEIEEDEDEIEDEE.

KH domains are found at residues 14–77 (KSIE…RDIV) and 106–163 (DYAS…KEAV).

The protein is KH domain-containing protein MJ0443 of Methanocaldococcus jannaschii (strain ATCC 43067 / DSM 2661 / JAL-1 / JCM 10045 / NBRC 100440) (Methanococcus jannaschii).